The chain runs to 148 residues: Leghemoglobin 3 (148 aa).

Residues 2-148 (GFTEKQEALV…LSAAIKKAMS (147 aa)) enclose the Globin domain. Position 30 is a nitrated tyrosine (Y30). S45 is a heme b binding site. At S45 the chain carries Phosphoserine. H63 contacts O2. Heme b contacts are provided by K66, H95, and K98. The residue at position 136 (Y136) is a Nitrated tyrosine.

Belongs to the plant globin family. Monomer. Nitrated in effective nodules and particularly in hypoxic conditions; this mechanism may play a protective role in the symbiosis by buffering toxic peroxynitrite NO(2)(-). Nitration level decrease during nodule senescence. Post-translationally, phosphorylation at Ser-45 disrupts the molecular environment of its porphyrin ring oxygen binding pocket, thus leading to a reduced oxygen consumption and to the delivery of oxygen O(2) to symbiosomes. Stem nodules.

It localises to the cytoplasm. The protein resides in the cytosol. It is found in the nucleus. Functionally, leghemoglobin that reversibly binds oxygen O(2) through a pentacoordinated heme iron. In stem nodules, facilitates the diffusion of oxygen to the bacteroids while preventing the bacterial nitrogenase from being inactivated by buffering dioxygen, nitric oxide and carbon monoxide, and promoting the formation of reactive oxygen species (ROS, e.g. H(2)O(2)). This role is essential for symbiotic nitrogen fixation (SNF). The protein is Leghemoglobin 3 of Sesbania rostrata.